The sequence spans 882 residues: Bifunctional heparan sulfate N-deacetylase/N-sulfotransferase 1 (882 aa).

The Cytoplasmic portion of the chain corresponds to 1–17; the sequence is MPALACLRRLCRHVSPQ. Residues 1–169 are sufficient for localization to Golgi membrane; it reads MPALACLRRL…VAYGVGIIGF (169 aa). A helical; Signal-anchor for type II membrane protein membrane pass occupies residues 18–39; it reads AVLFLLFIFCLFSVFISAYYLY. Positions 40-598 are heparan sulfate N-deacetylase 1; the sequence is GWKRGLEPSA…KRHKDIWSKE (559 aa). Residues 40 to 882 lie on the Lumenal side of the membrane; sequence GWKRGLEPSA…WLREDLQNTR (843 aa). Residues Asn-231, Asn-351, and Asn-401 are each glycosylated (N-linked (GlcNAc...) asparagine). A heparan sulfate N-sulfotransferase 1 region spans residues 599–882; it reads KTCDRFPKLL…WLREDLQNTR (284 aa). Lys-614 acts as the For sulfotransferase activity in catalysis. Residue 614 to 618 participates in adenosine 3',5'-bisphosphate binding; it reads KTGTT. N-linked (GlcNAc...) asparagine glycosylation is present at Asn-667. Adenosine 3',5'-bisphosphate is bound by residues Ser-712 and Trp-817. A disulfide bond links Cys-818 and Cys-828. 833 to 837 lines the adenosine 3',5'-bisphosphate pocket; it reads KGRKY.

The protein belongs to the sulfotransferase 1 family. NDST subfamily. In terms of assembly, monomer. As to quaternary structure, interacts with heparan sulfate co-polymerase subunits EXT1 and EXT2. Interacts with NDST1 isoform 3. Interacts with heparan sulfate co-polymerase subunits EXT1 and EXT2. Interacts with NDST1 isoform 1. Widely expressed. Expression is most abundant in heart, liver and pancreas.

It localises to the golgi apparatus. Its subcellular location is the trans-Golgi network membrane. The protein resides in the cis-Golgi network membrane. The enzyme catalyses N-acetyl-alpha-D-glucosaminyl-[heparan sulfate](n) + H2O = alpha-D-glucosaminyl-[heparan sulfate](n) + acetate. It catalyses the reaction alpha-D-glucosaminyl-[heparan sulfate](n) + 3'-phosphoadenylyl sulfate = N-sulfo-alpha-D-glucosaminyl-[heparan sulfate](n) + adenosine 3',5'-bisphosphate + 2 H(+). Its pathway is glycan metabolism; heparan sulfate biosynthesis. It participates in glycan metabolism; heparin biosynthesis. Its function is as follows. Essential bifunctional enzyme that catalyzes both the N-deacetylation and the N-sulfation of glucosamine (GlcNAc) of the glycosaminoglycan in heparan sulfate. Modifies the GlcNAc-GlcA disaccharide repeating sugar backbone to make N-sulfated heparosan, a prerequisite substrate for later modifications in heparin biosynthesis. Plays a role in determining the extent and pattern of sulfation of heparan sulfate. Participates in biosynthesis of heparan sulfate that can ultimately serve as L-selectin ligands, thereby playing a role in inflammatory response. Required for the exosomal release of SDCBP, CD63 and syndecan. Functionally, lacks both N-deacetylase and N-sulfotransferase activities. Acts as a dominant negative on isoform 1, likely by changing the composition of enzyme complexes responsible for elongation and modification of heparan sulfates. The polypeptide is Bifunctional heparan sulfate N-deacetylase/N-sulfotransferase 1 (Homo sapiens (Human)).